Reading from the N-terminus, the 536-residue chain is Probable protein S-acyltransferase 23 (536 aa).

Residues 1–23 (MDSSEIEVVPLDSNSHQSPTESP) form a disordered region. A compositionally biased stretch (polar residues) spans 12–23 (DSNSHQSPTESP). ANK repeat units lie at residues 57–86 (NGFY…DVNS), 90–119 (IQQT…RIEA), 123–153 (NGFR…DYNA), 157–186 (EGRS…CQNR), 190–219 (TGCT…KEEL), and 225–254 (TGST…TRKN). A run of 2 helical transmembrane segments spans residues 270 to 290 (YAPM…TSIV) and 298 to 318 (ITAM…YALI). Residues 363 to 413 (QLCPTCKIIRPVRSKHCPTCKRCVEQFDHHCPWISNCVGKKNKRYFLVFVI) enclose the DHHC domain. Residue Cys393 is the S-palmitoyl cysteine intermediate of the active site. Transmembrane regions (helical) follow at residues 407–427 (YFLV…TTAV) and 454–474 (AAVF…LTIS).

It belongs to the DHHC palmitoyltransferase family. As to expression, expressed in roots, shoots, flowers and pollen.

It localises to the golgi apparatus membrane. The catalysed reaction is L-cysteinyl-[protein] + hexadecanoyl-CoA = S-hexadecanoyl-L-cysteinyl-[protein] + CoA. Functionally, palmitoyl acyltransferase. This chain is Probable protein S-acyltransferase 23 (PAT23), found in Arabidopsis thaliana (Mouse-ear cress).